A 197-amino-acid polypeptide reads, in one-letter code: Fe/S biogenesis protein NfuA (197 aa).

[4Fe-4S] cluster-binding residues include cysteine 155 and cysteine 158.

This sequence belongs to the NfuA family. In terms of assembly, homodimer. It depends on [4Fe-4S] cluster as a cofactor.

Involved in iron-sulfur cluster biogenesis. Binds a 4Fe-4S cluster, can transfer this cluster to apoproteins, and thereby intervenes in the maturation of Fe/S proteins. Could also act as a scaffold/chaperone for damaged Fe/S proteins. The polypeptide is Fe/S biogenesis protein NfuA (Pseudomonas syringae pv. syringae (strain B728a)).